Here is a 120-residue protein sequence, read N- to C-terminus: Large ribosomal subunit protein uL18 (120 aa).

It belongs to the universal ribosomal protein uL18 family. Part of the 50S ribosomal subunit; part of the 5S rRNA/L5/L18/L25 subcomplex. Contacts the 5S and 23S rRNAs.

This is one of the proteins that bind and probably mediate the attachment of the 5S RNA into the large ribosomal subunit, where it forms part of the central protuberance. In Methylobacterium sp. (strain 4-46), this protein is Large ribosomal subunit protein uL18.